The following is a 264-amino-acid chain: Protein OXIDATIVE STRESS 3 LIKE 1 (264 aa).

2 disordered regions span residues 1 to 76 and 178 to 225; these read MDCV…GPLE and TGEG…QGSF. A compositionally biased stretch (low complexity) spans 29–43; that stretch reads PSDSSSSPSSSASSS. Basic and acidic residues predominate over residues 47–56; the sequence is NSDDGEKSSE. Residues 57-67 show a composition bias toward acidic residues; sequence DGGDDAGENEV. Over residues 179–201 the composition is skewed to low complexity; sequence GEGSSSGGDSSPGSSPTTSGSPP. A compositionally biased stretch (basic residues) spans 203 to 212; the sequence is QLHHHQHQMK.

It is found in the nucleus. Functionally, promotes slightly the tolerance to zinc (Zn) and to oxidizing chemicals (e.g. diamide). The polypeptide is Protein OXIDATIVE STRESS 3 LIKE 1 (Arabidopsis thaliana (Mouse-ear cress)).